A 255-amino-acid chain; its full sequence is MKHIPRKRFGQNFLTDDTVLYNIIRAIDPQPQDTMVEIGPGLAAMTRLLLEGVQQMHVVELDRDLVERLKKSFDPKRLIIHSADALQFDFSTIPVPAGSKLRVVGNLPYNISSPLLFHLAEMAPHVQDQHFMLQKEVVERMVAEPGSKVYGRLSVMLQWRYHMELMFVVPPTAFDPPPRVESAIVRMIPLAQPLPCDQAKLEQVVLKAFSQRRKVIRNCLAGMFAESDLLEVGIDPQLRPETIPLAQYVALANRL.

Residues asparagine 12, leucine 14, glycine 39, glutamate 60, aspartate 84, and asparagine 106 each coordinate S-adenosyl-L-methionine.

It belongs to the class I-like SAM-binding methyltransferase superfamily. rRNA adenine N(6)-methyltransferase family. RsmA subfamily.

The protein localises to the cytoplasm. It catalyses the reaction adenosine(1518)/adenosine(1519) in 16S rRNA + 4 S-adenosyl-L-methionine = N(6)-dimethyladenosine(1518)/N(6)-dimethyladenosine(1519) in 16S rRNA + 4 S-adenosyl-L-homocysteine + 4 H(+). Specifically dimethylates two adjacent adenosines (A1518 and A1519) in the loop of a conserved hairpin near the 3'-end of 16S rRNA in the 30S particle. May play a critical role in biogenesis of 30S subunits. The protein is Ribosomal RNA small subunit methyltransferase A of Janthinobacterium sp. (strain Marseille) (Minibacterium massiliensis).